The following is a 164-amino-acid chain: ATP synthase subunit b 1 (164 aa).

The chain crosses the membrane as a helical span at residues 8–28 (PETWVAVAFVILMGVFAYFGV).

This sequence belongs to the ATPase B chain family. In terms of assembly, F-type ATPases have 2 components, F(1) - the catalytic core - and F(0) - the membrane proton channel. F(1) has five subunits: alpha(3), beta(3), gamma(1), delta(1), epsilon(1). F(0) has three main subunits: a(1), b(2) and c(10-14). The alpha and beta chains form an alternating ring which encloses part of the gamma chain. F(1) is attached to F(0) by a central stalk formed by the gamma and epsilon chains, while a peripheral stalk is formed by the delta and b chains.

Its subcellular location is the cell inner membrane. F(1)F(0) ATP synthase produces ATP from ADP in the presence of a proton or sodium gradient. F-type ATPases consist of two structural domains, F(1) containing the extramembraneous catalytic core and F(0) containing the membrane proton channel, linked together by a central stalk and a peripheral stalk. During catalysis, ATP synthesis in the catalytic domain of F(1) is coupled via a rotary mechanism of the central stalk subunits to proton translocation. Functionally, component of the F(0) channel, it forms part of the peripheral stalk, linking F(1) to F(0). The chain is ATP synthase subunit b 1 from Rhodopseudomonas palustris (strain BisB18).